Here is a 771-residue protein sequence, read N- to C-terminus: Solute carrier family 7 member 14 (771 aa).

Transmembrane regions (helical) follow at residues 58–78 (LISL…SGLV), 83–103 (AGPG…LSGV), 119–141 (AYTY…NLIL), 187–207 (YPDL…ALGV), 216–236 (VLNV…LFFI), and 251–271 (WSGV…FDII). N282 is a glycosylation site (N-linked (GlcNAc...) asparagine). The next 5 membrane-spanning stretches (helical) occupy residues 291–311 (ASLV…TLMV), 336–356 (FVVA…SLFP), 360–380 (VIYA…VSSY), 384–404 (PVVA…LVSL), and 407–427 (LIEM…VCVL). Phosphoserine occurs at positions 465, 468, and 488. 4 helical membrane-spanning segments follow: residues 565-585 (VTIC…FIIF), 596-616 (WAIL…FVIL), 628-648 (MAPC…YLML), and 655-675 (WIRF…YGIW). A glycan (N-linked (GlcNAc...) asparagine) is linked at N676. The segment at 736–771 (DAKANGRTSSKAKSKSKHKQNSEALIANDELDYSPE) is disordered. Positions 745 to 754 (SKAKSKSKHK) are enriched in basic residues. S757 and S769 each carry phosphoserine.

Belongs to the amino acid-polyamine-organocation (APC) superfamily. Cationic amino acid transporter (CAT) (TC 2.A.3.3) family. As to expression, expressed in skin fibroblasts.

Its subcellular location is the lysosome membrane. It catalyses the reaction 4-aminobutanoate(in) = 4-aminobutanoate(out). Functionally, imports 4-aminobutanoate (GABA) into lysosomes. May act as a GABA sensor that regulates mTORC2-dependent INS signaling and gluconeogenesis. The transport mechanism and substrate selectivity remain to be elucidated. This Homo sapiens (Human) protein is Solute carrier family 7 member 14.